We begin with the raw amino-acid sequence, 103 residues long: Cell division protein FtsB (103 aa).

The Cytoplasmic segment spans residues 1–3 (MGK). A helical membrane pass occupies residues 4–21 (LTLLLLALLVWLQYSLWF). Topologically, residues 22-103 (GKNGIHDYSR…RAQTAGQNNR (82 aa)) are periplasmic. Residues 33–62 (NDDVVAQQATNAKLKARNDQLFAEIDDLNG) adopt a coiled-coil conformation.

Belongs to the FtsB family. As to quaternary structure, part of a complex composed of FtsB, FtsL and FtsQ.

It is found in the cell inner membrane. Its function is as follows. Essential cell division protein. May link together the upstream cell division proteins, which are predominantly cytoplasmic, with the downstream cell division proteins, which are predominantly periplasmic. The sequence is that of Cell division protein FtsB from Salmonella arizonae (strain ATCC BAA-731 / CDC346-86 / RSK2980).